Here is a 451-residue protein sequence, read N- to C-terminus: MCSTREEITEAFASLATALSRVLGLTFDALTTPERLALLEHCETARRQLPSVEHTLINQIGEQSTEEELGGKLGLTLADRLRITRSEAKRRVAEAADLGQRRALTGEPLPPLLTATAKAQRHGLIGDGHVEVIRAFVHRLPSWVDLKTLEKAERDLAKQATQYRPDQLAKLAARIMDCLNPDGDYTDEDRARRRGLTLGKQDVDGMSRLSGYVTPELRATIEAVWAKLAAPGMCNPEQKAPCVNGAPSKEQARRDTRSCPQRNHDALNAELRSLLTSGNLGQHNGLPASIIVTTTLKDLEAAAGAGLTGGGTILPISDVIRLARHANHYLAIFDRGKALALYHTKRLASPAQRIMLYAKDSGCSAPGCDVPGYYCEVHHVTPYAQCRNTDVNDLTLGCGGHHPLAERGWTTRKNAHGDTEWLPPPHLDHGQPRVNTFHHPEKLLADDEGDP.

Residues 415–435 (AHGDTEWLPPPHLDHGQPRVN) are disordered.

It belongs to the Rv1128c/1148c/1588c/1702c/1945/3466 family.

This is an uncharacterized protein from Mycobacterium tuberculosis (strain ATCC 25618 / H37Rv).